The sequence spans 407 residues: MAVPWLVLLLALPIFFLGVFVWAVFEHFLTTDIPATLQHPAKLRFLHCIFLYLVTLGNIFEKLGICSMPKFIRFLHDSVRIKKDPELVVTDLRFGTIPVRLFQPKAASSRPRRGIIFYHGGATVFGSLDCYHGLCNYLARETESVLLMIGYRKLPDHHSPALFQDCMNASIHFLKALETYGVDPSRVVVCGESVGGAAVAAITQALVGRSDLPRIRAQVLIYPVVQAFCLQLPSFQQNQNVPLLSRKFMVTSLCNYLAIDLSWRDAILNGTCVPPDVWRKYEKWLSPDNIPKKFKNRGYQPWSPGPFNEAAYLEAKHMLDVENSPLIADDEVIAQLPEAFLVSCENDILRDDSLLYKKRLEDQGVRVTWYHLYDGFHGSIIFFDKKALSFPCSLKIVNAVVSYIKGI.

At Met1–Pro4 the chain is on the cytoplasmic side. Residues Trp5 to Phe25 form a helical; Signal-anchor for type II membrane protein membrane-spanning segment. The Lumenal portion of the chain corresponds to Glu26–Ile407. The Involved in the stabilization of the negatively charged intermediate by the formation of the oxyanion hole signature appears at His119–Gly121. An N-linked (GlcNAc...) asparagine glycan is attached at Asn168. The active site involves Ser193. N-linked (GlcNAc...) asparagine glycosylation is present at Asn269. Catalysis depends on residues Asp347 and His377.

The protein belongs to the 'GDXG' lipolytic enzyme family.

The protein resides in the membrane. This is Arylacetamide deacetylase-like 4 (AADACL4) from Homo sapiens (Human).